The chain runs to 167 residues: NADH-ubiquinone oxidoreductase chain 6 (167 aa).

The next 5 membrane-spanning stretches (helical) occupy residues 1–21, 27–47, 50–70, 88–108, and 143–163; these read MKMM…VAFA, VYGG…VVSL, VFLG…VFGY, VALS…LMSG, and WALV…LEVV.

Belongs to the complex I subunit 6 family. Core subunit of respiratory chain NADH dehydrogenase (Complex I) which is composed of 45 different subunits.

It localises to the mitochondrion inner membrane. It carries out the reaction a ubiquinone + NADH + 5 H(+)(in) = a ubiquinol + NAD(+) + 4 H(+)(out). Functionally, core subunit of the mitochondrial membrane respiratory chain NADH dehydrogenase (Complex I) which catalyzes electron transfer from NADH through the respiratory chain, using ubiquinone as an electron acceptor. Essential for the catalytic activity and assembly of complex I. This Osphranter robustus (Wallaroo) protein is NADH-ubiquinone oxidoreductase chain 6 (MT-ND6).